The sequence spans 155 residues: SsrA-binding protein (155 aa).

A compositionally biased stretch (basic and acidic residues) spans 132–147 (KRESIKRREQDRDIKR). The segment at 132 to 155 (KRESIKRREQDRDIKRQMKQFNGR) is disordered.

It belongs to the SmpB family.

Its subcellular location is the cytoplasm. In terms of biological role, required for rescue of stalled ribosomes mediated by trans-translation. Binds to transfer-messenger RNA (tmRNA), required for stable association of tmRNA with ribosomes. tmRNA and SmpB together mimic tRNA shape, replacing the anticodon stem-loop with SmpB. tmRNA is encoded by the ssrA gene; the 2 termini fold to resemble tRNA(Ala) and it encodes a 'tag peptide', a short internal open reading frame. During trans-translation Ala-aminoacylated tmRNA acts like a tRNA, entering the A-site of stalled ribosomes, displacing the stalled mRNA. The ribosome then switches to translate the ORF on the tmRNA; the nascent peptide is terminated with the 'tag peptide' encoded by the tmRNA and targeted for degradation. The ribosome is freed to recommence translation, which seems to be the essential function of trans-translation. This Streptococcus mutans serotype c (strain ATCC 700610 / UA159) protein is SsrA-binding protein.